We begin with the raw amino-acid sequence, 389 residues long: Large envelope protein (389 aa).

N-acetylmethionine is present on Met1. Gly2 is lipidated: N-myristoyl glycine; by host. The pre-S1 stretch occupies residues Gly2–Ala108. The interval Gly2–Asn163 is pre-S. Residues Gly2–Gly170 are Virion surface; in external conformation-facing. Topologically, residues Gly2 to Arg242 are intravirion; in internal conformation. The interval Thr75–Gln107 is disordered. The segment covering Ser85 to Thr95 has biased composition (polar residues). Residues Met109–Asn163 are pre-S2. The chain crosses the membrane as a helical span at residues Phe171 to Ile191. Residues Pro192–Arg242 are Intravirion; in external conformation-facing. A helical transmembrane segment spans residues Phe243 to Tyr263. Over Gln264–Ser337 the chain is Virion surface. Asn309 carries an N-linked (GlcNAc...) asparagine; by host glycan. Residues Leu338 to Ile358 form a helical membrane-spanning segment. The Intravirion portion of the chain corresponds to Trp359–Trp364. The chain crosses the membrane as a helical span at residues Gly365–Val387. Residues Tyr388–Ile389 lie on the Virion surface side of the membrane.

The protein belongs to the orthohepadnavirus major surface antigen family. In its internal form (Li-HBsAg), interacts with the capsid protein and with the isoform S. Interacts with host chaperone CANX. As to quaternary structure, associates with host chaperone CANX through its pre-S2 N glycan; this association may be essential for isoform M proper secretion. In terms of assembly, interacts with isoform L. Interacts with the antigens of satellite virus HDV (HDVAgs); this interaction is required for encapsidation of HDV genomic RNA. Isoform M is N-terminally acetylated by host at a ratio of 90%, and N-glycosylated by host at the pre-S2 region. Post-translationally, myristoylated.

It is found in the virion membrane. Functionally, the large envelope protein exists in two topological conformations, one which is termed 'external' or Le-HBsAg and the other 'internal' or Li-HBsAg. In its external conformation the protein attaches the virus to cell receptors and thereby initiating infection. This interaction determines the species specificity and liver tropism. This attachment induces virion internalization predominantly through caveolin-mediated endocytosis. The large envelope protein also assures fusion between virion membrane and endosomal membrane. In its internal conformation the protein plays a role in virion morphogenesis and mediates the contact with the nucleocapsid like a matrix protein. Its function is as follows. The middle envelope protein plays an important role in the budding of the virion. It is involved in the induction of budding in a nucleocapsid independent way. In this process the majority of envelope proteins bud to form subviral lipoprotein particles of 22 nm of diameter that do not contain a nucleocapsid. The sequence is that of Large envelope protein from Pan troglodytes (Chimpanzee).